The primary structure comprises 398 residues: ATP-dependent RNA helicase eIF4A (398 aa).

Positions 25 to 53 (DSFDSMDLKPELLRGIYAYGFERPSAIQQ) match the Q motif motif. The Helicase ATP-binding domain occupies 56 to 226 (IMPIIKGSDV…TKFMRDPVRI (171 aa)). 69 to 76 (AQSGTGKT) provides a ligand contact to ATP. The short motif at 174–177 (DEAD) is the DEAD box element. The 162-residue stretch at 237-398 (GIKQFYIAVE…EMPMNVADLI (162 aa)) folds into the Helicase C-terminal domain.

The protein belongs to the DEAD box helicase family. eIF4A subfamily. As to quaternary structure, component of the eIF4F complex, which composition varies with external and internal environmental conditions. It is composed of at least eIF4A, eIF4E and eIF4G.

Its subcellular location is the cytoplasm. It catalyses the reaction ATP + H2O = ADP + phosphate + H(+). Functionally, ATP-dependent RNA helicase which is a subunit of the eIF4F complex involved in cap recognition and is required for mRNA binding to ribosome. In the current model of translation initiation, eIF4A unwinds RNA secondary structures in the 5'-UTR of mRNAs which is necessary to allow efficient binding of the small ribosomal subunit, and subsequent scanning for the initiator codon. The sequence is that of ATP-dependent RNA helicase eIF4A (tif1) from Aspergillus clavatus (strain ATCC 1007 / CBS 513.65 / DSM 816 / NCTC 3887 / NRRL 1 / QM 1276 / 107).